The chain runs to 142 residues: Large ribosomal subunit protein uL11 (142 aa).

Belongs to the universal ribosomal protein uL11 family. Part of the ribosomal stalk of the 50S ribosomal subunit. Interacts with L10 and the large rRNA to form the base of the stalk. L10 forms an elongated spine to which L12 dimers bind in a sequential fashion forming a multimeric L10(L12)X complex. One or more lysine residues are methylated.

Functionally, forms part of the ribosomal stalk which helps the ribosome interact with GTP-bound translation factors. The sequence is that of Large ribosomal subunit protein uL11 from Acinetobacter baumannii (strain AB307-0294).